Reading from the N-terminus, the 248-residue chain is Triosephosphate isomerase (248 aa).

9–11 serves as a coordination point for substrate; that stretch reads NWK. Histidine 94 (electrophile) is an active-site residue. Glutamate 166 serves as the catalytic Proton acceptor. Substrate-binding positions include glycine 172, serine 212, and 233–234; that span reads GG.

The protein belongs to the triosephosphate isomerase family. Homodimer.

The protein localises to the cytoplasm. The enzyme catalyses D-glyceraldehyde 3-phosphate = dihydroxyacetone phosphate. It participates in carbohydrate biosynthesis; gluconeogenesis. The protein operates within carbohydrate degradation; glycolysis; D-glyceraldehyde 3-phosphate from glycerone phosphate: step 1/1. In terms of biological role, involved in the gluconeogenesis. Catalyzes stereospecifically the conversion of dihydroxyacetone phosphate (DHAP) to D-glyceraldehyde-3-phosphate (G3P). This chain is Triosephosphate isomerase, found in Clostridium botulinum (strain Langeland / NCTC 10281 / Type F).